We begin with the raw amino-acid sequence, 302 residues long: Sulfate adenylyltransferase subunit 2 (302 aa).

Belongs to the PAPS reductase family. CysD subfamily. In terms of assembly, heterodimer composed of CysD, the smaller subunit, and CysN.

The enzyme catalyses sulfate + ATP + H(+) = adenosine 5'-phosphosulfate + diphosphate. It functions in the pathway sulfur metabolism; hydrogen sulfide biosynthesis; sulfite from sulfate: step 1/3. Functionally, with CysN forms the ATP sulfurylase (ATPS) that catalyzes the adenylation of sulfate producing adenosine 5'-phosphosulfate (APS) and diphosphate, the first enzymatic step in sulfur assimilation pathway. APS synthesis involves the formation of a high-energy phosphoric-sulfuric acid anhydride bond driven by GTP hydrolysis by CysN coupled to ATP hydrolysis by CysD. This Pectobacterium carotovorum subsp. carotovorum (strain PC1) protein is Sulfate adenylyltransferase subunit 2.